An 83-amino-acid polypeptide reads, in one-letter code: Large ribosomal subunit protein eL43 (83 aa).

Positions 38, 41, 56, and 59 each coordinate Zn(2+). Residues 38–59 (CPVCGRKAVKRISTGIWQCQKC) form a C4-type zinc finger.

The protein belongs to the eukaryotic ribosomal protein eL43 family. Putative zinc-binding subfamily. In terms of assembly, part of the 50S ribosomal subunit. It depends on Zn(2+) as a cofactor.

In terms of biological role, binds to the 23S rRNA. The chain is Large ribosomal subunit protein eL43 from Pyrococcus furiosus (strain ATCC 43587 / DSM 3638 / JCM 8422 / Vc1).